A 493-amino-acid chain; its full sequence is MDHNDNDLQGTNSSASLGGLDVRRRIPIKLISKQTNKTKPAPRAPRAMNRMPAKTQAGDEEEFDFNEEERYECKGGEMFGNQRRFPGPIFWDYKINLLGEKDDTPVHFCDKCGLPIKMYGRMIPCKHVFCYDCAILHEKKGDKMCPGCNEPVQRIEQCVRGSLFMCSIVQGCKRTYLSQRDLQAHINHRHMRAGKPVTRPPLEPVHPPIAPPPAEIPERFIMPPEKHHMSHIPPKQHIMMPPPPLQHVPHEHYNQPHEDIRPPPAEMSMAPPPPRPVSQDTFRISTRKHSNLITVPIQDDSNSGAREPPPPAPAPAHHHPEYQGQPVVTHPHHIMPPQQHYAPPPPPPPPISHPLQHPPQAAGTPHMVYSQAPPPPMTSAPPPITPPPGHIIAQMPPYMNHPPPGPPPPQHGGPPVNVSAPPPHHYNPNSLPQFSEDQGTLSPPFTQPGGMSPGIWPAPRGPPPPPRMQGPPAQAPLAGPHHPDQARYRPYYQ.

2 disordered regions span residues 1-20 (MDHN…LGGL) and 28-61 (IKLI…GDEE). Over residues 7–16 (DLQGTNSSAS) the composition is skewed to polar residues. Residues 109–149 (CDKCGLPIKMYGRMIPCKHVFCYDCAILHEKKGDKMCPGCN) form an RING-type zinc finger. The segment at 148–206 (CNEPVQRIEQCVRGSLFMCSIVQGCKRTYLSQRDLQAHINHRHMRAGKPVTRPPLEPVH) is HYB domain. The C2H2-type zinc finger occupies 164–190 (FMCSIVQGCKRTYLSQRDLQAHINHRH). The interval 253–493 (YNQPHEDIRP…DQARYRPYYQ (241 aa)) is disordered. Composition is skewed to pro residues over residues 262–276 (PPPA…PPRP), 342–352 (APPPPPPPPIS), 372–389 (APPP…PPPG), and 399–412 (MNHP…PQHG). Residues 427–444 (NPNSLPQFSEDQGTLSPP) are compositionally biased toward polar residues. Residues 459–469 (PRGPPPPPRMQ) show a composition bias toward pro residues. Over residues 470 to 480 (GPPAQAPLAGP) the composition is skewed to low complexity.

This sequence belongs to the Hakai family. Homodimer. Interacts with tyrosine-phosphorylated SRC substrates. Component of the WMM complex, a N6-methyltransferase complex composed of a catalytic subcomplex, named MAC, and of an associated subcomplex, named MACOM. Component of the MACOM subcomplex.

It localises to the nucleus speckle. It is found in the nucleus. The protein resides in the nucleoplasm. It catalyses the reaction S-ubiquitinyl-[E2 ubiquitin-conjugating enzyme]-L-cysteine + [acceptor protein]-L-lysine = [E2 ubiquitin-conjugating enzyme]-L-cysteine + N(6)-ubiquitinyl-[acceptor protein]-L-lysine.. Its pathway is protein modification; protein ubiquitination. Its function is as follows. E3 ubiquitin-protein ligase that mediates ubiquitination of several tyrosine-phosphorylated Src substrates. Associated component of the WMM complex, a complex that mediates N6-methyladenosine (m6A) methylation of RNAs, a modification that plays a role in the efficiency of mRNA splicing and RNA processing. This Gallus gallus (Chicken) protein is E3 ubiquitin-protein ligase Hakai.